We begin with the raw amino-acid sequence, 323 residues long: MKPENKIPVLTRLSDEMTAVVNFQQPGLPPWPADGDIETQRQYYLLERRFWNADAPSMTTRTCAVSTPYGDVTTRLYSPQPTSQATLYYLHGGGFILGNLDTHDRIMRLLARYTGCTVIGIDYSLSPQARYPQAIEETVAVCSYFSQHADEYSLNVEEIGFAGDSAGAMLALASALWLRDKHIRCGNVIAILLWYGLYGLQDSVSRRLFGGAWDGLTREDLDMYEKAYLRNDEDRESPWYCLFNNDLTRDVPPCFIASAEFDPLIDDSRLLHQTLQAHQQPCEYKMYPGTLHAFLHYSRMMTIADDALQDGARFFMARMKTPR.

An Involved in the stabilization of the negatively charged intermediate by the formation of the oxyanion hole motif is present at residues 91 to 93 (HGG). Residues Ser-165, Asp-262, and His-292 contribute to the active site.

Belongs to the 'GDXG' lipolytic enzyme family. In terms of assembly, homodimer. Interacts with MalT and MelA.

It localises to the cytoplasm. Displays esterase activity towards short chain fatty esters (acyl chain length of up to 8 carbons). Able to hydrolyze triacetylglycerol (triacetin) and tributyrylglycerol (tributyrin), but not trioleylglycerol (triolein) or cholesterol oleate. Negatively regulates MalT activity by antagonizing maltotriose binding. Inhibits MelA galactosidase activity. This Salmonella typhi protein is Acetyl esterase.